The chain runs to 2776 residues: A-kinase anchor protein 13 (2776 aa).

11 disordered regions span residues 371-401, 452-518, 547-584, 618-641, 653-689, 760-871, 910-951, 995-1029, 1431-1508, 1527-1546, and 1565-1603; these read KNKD…SCLQ, EPDA…TETT, PAEA…QSSP, TMPG…PAQS, EAGT…ESTM, VSQT…SPTA, ALGQ…IPGL, GAAK…LPSG, LCDT…MDSI, PFRR…AEMN, and RRSF…FGGE. Residues 389-401 are compositionally biased toward polar residues; the sequence is DSGSASHQDSCLQ. Positions 493-515 are important for interaction with PRKAR2A; sequence QNNKPQVGEGTKERLENSDSSTT. The segment covering 560–573 has biased composition (basic and acidic residues); sequence PTEKPGMETQERGC. Residues 659–672 are compositionally biased toward polar residues; the sequence is AEATHQPSTVTSSG. Residues 773–788 show a composition bias toward low complexity; sequence SPPASSFSLASSPESE. Phosphoserine is present on Ser784. Residue Thr809 is modified to Phosphothreonine. Basic and acidic residues-rich tracts occupy residues 820–834 and 914–940; these read DGPD…DKVG and DGKD…EDQR. Thr941 carries the post-translational modification Phosphothreonine. The span at 1005 to 1020 shows a compositional bias: polar residues; it reads TSLSADSKQKASSTEQ. The segment covering 1433–1444 has biased composition (low complexity); the sequence is DTTGSSSSTDDT. The segment covering 1454–1476 has biased composition (polar residues); sequence GSDVSLPQTSKLNRSRNHQSANG. 5 positions are modified to phosphoserine: Ser1455, Ser1473, Ser1507, Ser1532, and Ser1569. Residues 1552-1678 form an important for interaction with MAP2K3 region; it reads RALGHVVRRP…SRPFHSTSAN (127 aa). Residues 1583-1594 show a composition bias toward low complexity; it reads SSSLEMSSANSS. Ser1608, Ser1611, and Ser1613 each carry phosphoserine. N6-methyllysine is present on Lys1637. A disordered region spans residues 1711 to 1756; sequence TFSYIRNKMSSSKKSKEKEKEKDKIKEKEKDSKEKEKDKKTLNGHT. Residues 1724-1751 show a composition bias toward basic and acidic residues; the sequence is KSKEKEKEKDKIKEKEKDSKEKEKDKKT. The segment at 1754–1801 adopts a Phorbol-ester/DAG-type zinc-finger fold; it reads GHTFSPIPIVGPISCSQCMKPFTNKDAYTCAGCGAFVHKGCRENLASC. Ser1839, Ser1858, and Ser1892 each carry phosphoserine. The segment at 1882-2776 is interaction with ESR1; the sequence is MSNTWKFLSH…VPAEGEEIFC (895 aa). Thr1893 carries the phosphothreonine modification. 2 positions are modified to phosphoserine: Ser1895 and Ser1908. Residues 1957-2154 form the DH domain; that stretch reads KRQEVIYELM…KDVIGAVDSK (198 aa). Residues 2194 to 2296 enclose the PH domain; it reads KLVRDGSVFL…WIQIIQDTIN (103 aa). Phosphoserine occurs at positions 2308 and 2361. Positions 2308–2345 form a coiled coil; it reads SENEEEKKLLDTKARELKEQLQQKDQQILLLLEEKEMI. At Thr2431 the chain carries Phosphothreonine. The interval 2436 to 2471 is disordered; that stretch reads DCHQMNASKGGEKEEGDDGQDLRRTESDSGLKKGGN. Positions 2455-2466 are enriched in basic and acidic residues; the sequence is QDLRRTESDSGL. Ser2527 and Ser2530 each carry phosphoserine. Residues 2532–2646 are a coiled coil; sequence LIEQEKQRSL…ERLSQRQMDQ (115 aa). Disordered regions lie at residues 2549–2605 and 2626–2776; these read ANLQ…EELQ and EREQ…EIFC. Basic and acidic residues-rich tracts occupy residues 2558-2605 and 2626-2640; these read HLEE…EELQ and EREQ…ERLS. 3 stretches are compositionally biased toward polar residues: residues 2641-2653, 2665-2700, and 2713-2727; these read QRQM…QVSN, LPNS…SISR, and SASQ…SQAP. 2 positions are modified to phosphoserine: Ser2673 and Ser2692.

In terms of assembly, interacts with the cAMP-dependent protein kinase (PKA) holoenzyme and with the regulatory subunit PRKAR2A. Interacts with RHOA. Also interacts with RHOB and RHOC. Identified in a ternary complex with RHOA and PRKAR2A. Identified in a complex with NR3C1 and RHOA. Interacts with BRAF and KSR1. Identified in a complex with BRAF and KSR1. Component of a signaling complex containing at least AKAP13, PKN1, MAPK14, ZAK and MAP2K3. Within this complex, AKAP13 interacts directly with PKN1, which in turn recruits MAPK14, MAP2K3 and ZAK. Interacts (phosphorylated form) with YWHAB and YWHAZ. Interaction with YWHAB inhibits activation of RHOA, interferes with PKN1 binding and activation of MAP kinases. Interacts with GNA12. Interacts with IKBKB. Interacts with ESR1, THRA, PPARA and NME2. Interacts (via the C-terminal domain after the PH domain) with MEF2C and RXRB. Interacts (via the C-terminal domain after the PH domain) with PRKD1. In terms of tissue distribution, detected in embryonic heart, limb bud, first branchial arch and forebrain (at protein level). Detected in heart. Detected in perichondrium, but not in the bone growth plate.

Its subcellular location is the cytoplasm. It is found in the cytosol. The protein resides in the cell cortex. It localises to the cytoskeleton. The protein localises to the nucleus. Its subcellular location is the membrane. Scaffold protein that plays an important role in assembling signaling complexes downstream of several types of G protein-coupled receptors. Activates RHOA in response to signaling via G protein-coupled receptors via its function as Rho guanine nucleotide exchange factor. May also activate other Rho family members. Part of a kinase signaling complex that links ADRA1A and ADRA1B adrenergic receptor signaling to the activation of downstream p38 MAP kinases, such as MAPK11 and MAPK14. Part of a signaling complex that links ADRA1B signaling to the activation of RHOA and IKBKB/IKKB, leading to increased NF-kappa-B transcriptional activity. Part of a RHOA-dependent signaling cascade that mediates responses to lysophosphatidic acid (LPA), a signaling molecule that activates G-protein coupled receptors and potentiates transcriptional activation of the glucocorticoid receptor NR3C1. Part of a signaling cascade that stimulates MEF2C-dependent gene expression in response to lysophosphatidic acid (LPA). Part of a signaling pathway that activates MAPK11 and/or MAPK14 and leads to increased transcription activation of the estrogen receptors ESR1 and ESR2. Part of a signaling cascade that links cAMP and EGFR signaling to BRAF signaling and to PKA-mediated phosphorylation of KSR1, leading to the activation of downstream MAP kinases, such as MAPK1 or MAPK3. Functions as a scaffold protein that anchors cAMP-dependent protein kinase (PKA) and PRKD1. This promotes activation of PRKD1, leading to increased phosphorylation of HDAC5 and ultimately cardiomyocyte hypertrophy. Has no guanine nucleotide exchange activity on CDC42, Ras or Rac. Required for normal embryonic heart development, and in particular for normal sarcomere formation in the developing cardiomyocytes. Plays a role in cardiomyocyte growth and cardiac hypertrophy in response to activation of the beta-adrenergic receptor by phenylephrine or isoproterenol. Required for normal adaptive cardiac hypertrophy in response to pressure overload. Plays a role in osteogenesis. The polypeptide is A-kinase anchor protein 13 (Mus musculus (Mouse)).